Consider the following 155-residue polypeptide: Transcriptional repressor NrdR (155 aa).

A zinc finger lies at 3-34 (CPFCGHSSTQVLDSRVSEDGDTVRRRRRCEAC). The ATP-cone domain occupies 49 to 139 (PAIVKKNGSR…VYRSFEDVSE (91 aa)).

It belongs to the NrdR family. It depends on Zn(2+) as a cofactor.

Functionally, negatively regulates transcription of bacterial ribonucleotide reductase nrd genes and operons by binding to NrdR-boxes. The polypeptide is Transcriptional repressor NrdR (Cupriavidus metallidurans (strain ATCC 43123 / DSM 2839 / NBRC 102507 / CH34) (Ralstonia metallidurans)).